The chain runs to 185 residues: Ribosome-recycling factor (185 aa).

It belongs to the RRF family.

It is found in the cytoplasm. Functionally, responsible for the release of ribosomes from messenger RNA at the termination of protein biosynthesis. May increase the efficiency of translation by recycling ribosomes from one round of translation to another. This is Ribosome-recycling factor from Bacillus cereus (strain B4264).